The chain runs to 203 residues: Snake venom metalloproteinase atroxase (203 aa).

At Glu-1 the chain carries Pyrrolidone carboxylic acid (Glu). Asn-5 carries an N-linked (GlcNAc...) asparagine glycan. A Peptidase M12B domain is found at Arg-9–Lys-203. Ca(2+) contacts are provided by Glu-12 and Asp-96. His-145 provides a ligand contact to Zn(2+). The active site involves Glu-146. 2 residues coordinate Zn(2+): His-149 and His-155. Cys-160 and Cys-167 are oxidised to a cystine. Asn-202 provides a ligand contact to Ca(2+).

The protein belongs to the venom metalloproteinase (M12B) family. P-I subfamily. In terms of assembly, monomer. Zn(2+) serves as cofactor. Post-translationally, the N-terminus is blocked. As to expression, expressed by the venom gland.

It localises to the secreted. The catalysed reaction is Cleavage of 5-His-|-Leu-6, 9-Ser-|-His-10, 10-His-|-Leu-11, 14-Ala-|-Leu-15 and 16-Tyr-|-Leu-17 in insulin B chain.. With respect to regulation, inhibited by EDTA and alpha2-macroglobulin. Its function is as follows. Snake venom zinc metalloprotease that has Aalpha, Bbeta fibrin(ogen)olytic activities. It cleaves the Aalpha chain of fibrinogen first followed by the Bbeta chain and shows no effect on the gamma chain. Does not induce or inhibit platelet aggregation, and is unable to activate plasminogen. Exhibits low lethality when tested on mice. Intravenous administration results in thrombolysis within one hour followed by recanalization. Fibrinogenolytic activity results in a 60% decrease in the rat's plasma fibrinogen level. Histological examination of kidney, liver, heart and lung tissue shows no necrosis nor hemorrhage. The protein is Snake venom metalloproteinase atroxase of Crotalus atrox (Western diamondback rattlesnake).